We begin with the raw amino-acid sequence, 274 residues long: 2,3,4,5-tetrahydropyridine-2,6-dicarboxylate N-succinyltransferase (274 aa).

Positions 104 and 141 each coordinate substrate.

The protein belongs to the transferase hexapeptide repeat family. As to quaternary structure, homotrimer.

Its subcellular location is the cytoplasm. It catalyses the reaction (S)-2,3,4,5-tetrahydrodipicolinate + succinyl-CoA + H2O = (S)-2-succinylamino-6-oxoheptanedioate + CoA. Its pathway is amino-acid biosynthesis; L-lysine biosynthesis via DAP pathway; LL-2,6-diaminopimelate from (S)-tetrahydrodipicolinate (succinylase route): step 1/3. This is 2,3,4,5-tetrahydropyridine-2,6-dicarboxylate N-succinyltransferase from Buchnera aphidicola subsp. Baizongia pistaciae (strain Bp).